Reading from the N-terminus, the 118-residue chain is Small ribosomal subunit protein uS12cz/uS12cy (118 aa).

Belongs to the universal ribosomal protein uS12 family. In terms of assembly, part of the 30S ribosomal subunit.

It is found in the plastid. Its subcellular location is the chloroplast. Its function is as follows. With S4 and S5 plays an important role in translational accuracy. Located at the interface of the 30S and 50S subunits. This Helianthus annuus (Common sunflower) protein is Small ribosomal subunit protein uS12cz/uS12cy (rps12-A).